A 499-amino-acid polypeptide reads, in one-letter code: MGVVLLPPPLSMLMLVLMLLPAASASEAEHRLFQYLFEDYNEIIRPVANVSHPVIIQFEVSMSQLVKVDEVNQIMETNLWLKQIWNDYKLKWKPSDYQGVEFMRVPAEKIWKPDIVLYNNADGDFQVDDKTKALLKYTGEVTWIPPAIFKSSCKIDVTYFPFDYQNCTMKFGSWSYDKAKIDLVLIGSSMNLKDYWESGEWAIIKAPGYKHEIKYNCCEEIYQDITYSLYIRRLPLFYTINLIIPCLLISFLTVLVFYLPSDCGEKVTLCISVLLSLTVFLLVITETIPSTSLVIPLIGEYLLFTMIFVTLSIVITVFVLNVHYRTPTTHTMPTWVKAVFLNLLPRVMFMTRPTSGEGDTPKTRTFYGAELSNLNCFSRADSKSCKEGYPCQDGTCGYCHHRRVKISNFSANLTRSSSSESVNAVLSLSALSPEIKEAIQSVKYIAENMKAQNVAKEIQDDWKYVAMVIDRIFLWVFILVCILGTAGLFLQPLMARDDT.

An N-terminal signal peptide occupies residues 1 to 25; sequence MGVVLLPPPLSMLMLVLMLLPAASA. Over 26–244 the chain is Extracellular; it reads SEAEHRLFQY…PLFYTINLII (219 aa). N-linked (GlcNAc...) asparagine glycosylation is found at Asn49 and Asn166. Cystine bridges form between Cys153–Cys167 and Cys217–Cys218. The helical transmembrane segment at 245–260 threads the bilayer; it reads PCLLISFLTVLVFYLP. At 261–262 the chain is on the cytoplasmic side; that stretch reads SD. Residues 263 to 279 form a helical membrane-spanning segment; it reads CGEKVTLCISVLLSLTV. Glu265 contacts Na(+). Residues 280–301 are Extracellular-facing; it reads FLLVITETIPSTSLVIPLIGEY. Residues 302-320 traverse the membrane as a helical segment; that stretch reads LLFTMIFVTLSIVITVFVL. Over 321–468 the chain is Cytoplasmic; that stretch reads NVHYRTPTTH…QDDWKYVAMV (148 aa). Phosphoserine is present on residues Ser407 and Ser410. A helical transmembrane segment spans residues 469 to 487; that stretch reads IDRIFLWVFILVCILGTAG. Topologically, residues 488–499 are extracellular; that stretch reads LFLQPLMARDDT.

Belongs to the ligand-gated ion channel (TC 1.A.9) family. Acetylcholine receptor (TC 1.A.9.1) subfamily. Alpha-3/CHRNA3 sub-subfamily. As to quaternary structure, neuronal AChR is composed of two different types of subunits: alpha and beta. CHRNA3/Alpha-3 subunit can be combined to CHRNB2/beta-2 or CHRNB4/beta-4 to give rise to functional receptors. Part of a complex composed of STUB1/CHIP, VCP/p97, CHRNA3, and UBXN2A that modulates the ubiquitination and endoplasmic reticulum-associated degradation (ERAD) of CHRNA3. Within the complex UBXN2A acts as a scaffold protein required for the interaction of CHRNA3 with VCP/p97, this interaction also inhibits CHRNA3 ubiquitination by STUB1/CHIP and subsequently ERAD. Interacts with UBXN2A (via SEP domain), the interaction is required for the interaction of CHRNA3 in the STUB1:VCP:UBXN2A complex. Interacts with RIC3; which is required for proper folding and assembly. In terms of processing, ubiquitinated; by STUB1/CHIP and thereafter degraded by the 26S proteosome complex. Expressed in neurons. Expressed in umbrella cells of urothelium (at protein level).

It is found in the synaptic cell membrane. The protein localises to the cell membrane. The protein resides in the endoplasmic reticulum. It localises to the golgi apparatus. The enzyme catalyses Ca(2+)(in) = Ca(2+)(out). The catalysed reaction is K(+)(in) = K(+)(out). It carries out the reaction Na(+)(in) = Na(+)(out). Activated by a myriad of ligands such as acetylcholine, cytisine, nicotine, choline and epibatidine. The heteropentamer CHRNA3:CHRNB2 activity is blocked by alpha-conotoxins ImI, ImII, PnIA, GID and MII. The heteropentamer CHRNA3:CHRNB4 activity is blocked by the alpha-conotoxin ImI and AuIB. Component of neuronal acetylcholine receptors (nAChRs) that function as pentameric, ligand-gated cation channels with high calcium permeability among other activities. nAChRs are excitatory neurotrasnmitter receptors formed by a collection of nAChR subunits known to mediate synaptic transmission in the nervous system and the neuromuscular junction. Each nAchR subunit confers differential attributes to channel properties, including activation, deactivation and desensitization kinetics, pH sensitivity, cation permeability, and binding to allosteric modulators. CHRNA3 forms heteropentameric neuronal acetylcholine receptors with CHRNB2 and CHRNB4. CHRNA3:CHRNB4 being predominant in neurons of the autonomic ganglia, it is known as ganglionic nicotinic receptor. CHRNA3:CHRNB4 also plays an important role in the habenulo-interpeduncular tract, modulating the mesolimbic dopamine system and affecting reward circuits and addiction. Hypothalamic CHRNA3:CHRNB4 nAChR activation by nicotine leads to activation of POMC neurons and a decrease in food intake. Also expressed in the urothelium where it modulates reflex bladder activity by increasing intracellular calcium through extracellular influx and basal ATP release. This Rattus norvegicus (Rat) protein is Neuronal acetylcholine receptor subunit alpha-3 (Chrna3).